A 426-amino-acid chain; its full sequence is MLDKDLILNDNTYELSQISRHKTHVVEVGKVKIGGNNPVVVQSMALGVHIDADNIKSSAKHYAKEITELARTGSELVRIALNSEEVARAIPYIVEEINKEGFDGKILVGCGQYELDKLVQDYPDNIKMLGKIRINPGNIGFGDKRDEKFERVIEYAIMHDLPVRIGVNWGSLDKYLLQKLMDENSSLSNSRPSDVILRKALVMSALDSAKKAEGIGLNSNKIIISCKVSKVQDLILVYMALAKSSNYALHLGLTEAGMGNKGVVNTAAGLTYLLQNGIGDTIRASLTQRPGESRTNEVVVCQEILQSIGLRYFNPQVNSCPGCGRTSSDRFRILTEEVNGYIKTHIPIWKKKNPGVEHMSIAVMGCIVNGPGESKHANLGISLPGYGEKPVSAVYKDGKYFKTLQGDNVSEEFKAIIDNYVKEHYT.

Residues Cys320, Cys323, Cys366, and Glu373 each contribute to the [4Fe-4S] cluster site.

This sequence belongs to the IspG family. Requires [4Fe-4S] cluster as cofactor.

The catalysed reaction is (2E)-4-hydroxy-3-methylbut-2-enyl diphosphate + oxidized [flavodoxin] + H2O + 2 H(+) = 2-C-methyl-D-erythritol 2,4-cyclic diphosphate + reduced [flavodoxin]. The protein operates within isoprenoid biosynthesis; isopentenyl diphosphate biosynthesis via DXP pathway; isopentenyl diphosphate from 1-deoxy-D-xylulose 5-phosphate: step 5/6. Its function is as follows. Converts 2C-methyl-D-erythritol 2,4-cyclodiphosphate (ME-2,4cPP) into 1-hydroxy-2-methyl-2-(E)-butenyl 4-diphosphate. This Wolbachia sp. subsp. Drosophila simulans (strain wRi) protein is 4-hydroxy-3-methylbut-2-en-1-yl diphosphate synthase (flavodoxin).